The sequence spans 344 residues: Holliday junction branch migration complex subunit RuvB (344 aa).

Residues 1-185 are large ATPase domain (RuvB-L); sequence MTERSDRDVS…FGFTAHMDFY (185 aa). ATP contacts are provided by residues Leu-24, Arg-25, Gly-66, Lys-69, Thr-70, Ser-71, 132 to 134, Arg-175, Tyr-185, and Arg-222; that span reads EDF. Mg(2+) is bound at residue Thr-70. The small ATPAse domain (RuvB-S) stretch occupies residues 186–256; the sequence is EPAELERVLA…VAKAALEVYD (71 aa). Residues 259–344 form a head domain (RuvB-H) region; that stretch reads ELGLDRLDRA…VGASQPGLFE (86 aa). DNA is bound by residues Arg-314 and Arg-319.

This sequence belongs to the RuvB family. As to quaternary structure, homohexamer. Forms an RuvA(8)-RuvB(12)-Holliday junction (HJ) complex. HJ DNA is sandwiched between 2 RuvA tetramers; dsDNA enters through RuvA and exits via RuvB. An RuvB hexamer assembles on each DNA strand where it exits the tetramer. Each RuvB hexamer is contacted by two RuvA subunits (via domain III) on 2 adjacent RuvB subunits; this complex drives branch migration. In the full resolvosome a probable DNA-RuvA(4)-RuvB(12)-RuvC(2) complex forms which resolves the HJ.

Its subcellular location is the cytoplasm. The catalysed reaction is ATP + H2O = ADP + phosphate + H(+). Its function is as follows. The RuvA-RuvB-RuvC complex processes Holliday junction (HJ) DNA during genetic recombination and DNA repair, while the RuvA-RuvB complex plays an important role in the rescue of blocked DNA replication forks via replication fork reversal (RFR). RuvA specifically binds to HJ cruciform DNA, conferring on it an open structure. The RuvB hexamer acts as an ATP-dependent pump, pulling dsDNA into and through the RuvAB complex. RuvB forms 2 homohexamers on either side of HJ DNA bound by 1 or 2 RuvA tetramers; 4 subunits per hexamer contact DNA at a time. Coordinated motions by a converter formed by DNA-disengaged RuvB subunits stimulates ATP hydrolysis and nucleotide exchange. Immobilization of the converter enables RuvB to convert the ATP-contained energy into a lever motion, pulling 2 nucleotides of DNA out of the RuvA tetramer per ATP hydrolyzed, thus driving DNA branch migration. The RuvB motors rotate together with the DNA substrate, which together with the progressing nucleotide cycle form the mechanistic basis for DNA recombination by continuous HJ branch migration. Branch migration allows RuvC to scan DNA until it finds its consensus sequence, where it cleaves and resolves cruciform DNA. The chain is Holliday junction branch migration complex subunit RuvB from Mycobacterium tuberculosis (strain ATCC 25177 / H37Ra).